Here is a 270-residue protein sequence, read N- to C-terminus: Acyl-[acyl-carrier-protein]--UDP-N-acetylglucosamine O-acyltransferase (270 aa).

This sequence belongs to the transferase hexapeptide repeat family. LpxA subfamily. Homotrimer.

It is found in the cytoplasm. The catalysed reaction is a (3R)-hydroxyacyl-[ACP] + UDP-N-acetyl-alpha-D-glucosamine = a UDP-3-O-[(3R)-3-hydroxyacyl]-N-acetyl-alpha-D-glucosamine + holo-[ACP]. Its pathway is glycolipid biosynthesis; lipid IV(A) biosynthesis; lipid IV(A) from (3R)-3-hydroxytetradecanoyl-[acyl-carrier-protein] and UDP-N-acetyl-alpha-D-glucosamine: step 1/6. Its function is as follows. Involved in the biosynthesis of lipid A, a phosphorylated glycolipid that anchors the lipopolysaccharide to the outer membrane of the cell. The polypeptide is Acyl-[acyl-carrier-protein]--UDP-N-acetylglucosamine O-acyltransferase (Helicobacter pylori (strain Shi470)).